The chain runs to 135 residues: Large-conductance mechanosensitive channel (135 aa).

Transmembrane regions (helical) follow at residues 10 to 30 (FAMR…AAFG) and 76 to 96 (GVFI…FLAI).

The protein belongs to the MscL family. Homopentamer.

It is found in the cell inner membrane. Its function is as follows. Channel that opens in response to stretch forces in the membrane lipid bilayer. May participate in the regulation of osmotic pressure changes within the cell. The polypeptide is Large-conductance mechanosensitive channel (Cronobacter sakazakii (strain ATCC BAA-894) (Enterobacter sakazakii)).